We begin with the raw amino-acid sequence, 150 residues long: 3-hydroxyacyl-[acyl-carrier-protein] dehydratase FabZ (150 aa).

His-51 is a catalytic residue.

Belongs to the thioester dehydratase family. FabZ subfamily.

Its subcellular location is the cytoplasm. The catalysed reaction is a (3R)-hydroxyacyl-[ACP] = a (2E)-enoyl-[ACP] + H2O. Functionally, involved in unsaturated fatty acids biosynthesis. Catalyzes the dehydration of short chain beta-hydroxyacyl-ACPs and long chain saturated and unsaturated beta-hydroxyacyl-ACPs. This Legionella pneumophila (strain Lens) protein is 3-hydroxyacyl-[acyl-carrier-protein] dehydratase FabZ.